The following is a 446-amino-acid chain: Histidine--tRNA ligase (446 aa).

The protein belongs to the class-II aminoacyl-tRNA synthetase family. Homodimer.

The protein localises to the cytoplasm. It carries out the reaction tRNA(His) + L-histidine + ATP = L-histidyl-tRNA(His) + AMP + diphosphate + H(+). The sequence is that of Histidine--tRNA ligase from Burkholderia ambifaria (strain MC40-6).